The following is a 346-amino-acid chain: GTPase Obg (346 aa).

Residues 1 to 158 (MFIDKAKIYV…RWIELELKLL (158 aa)) enclose the Obg domain. In terms of domain architecture, OBG-type G spans 159–330 (ADVGIIGFPN…LINLIRETRD (172 aa)). GTP contacts are provided by residues 165–172 (GFPNAGKS), 190–194 (FTTLT), 212–215 (DIPG), 282–285 (NKID), and 311–313 (SLI). Residues serine 172 and threonine 192 each contribute to the Mg(2+) site.

It belongs to the TRAFAC class OBG-HflX-like GTPase superfamily. OBG GTPase family. As to quaternary structure, monomer. It depends on Mg(2+) as a cofactor.

The protein resides in the cytoplasm. In terms of biological role, an essential GTPase which binds GTP, GDP and possibly (p)ppGpp with moderate affinity, with high nucleotide exchange rates and a fairly low GTP hydrolysis rate. Plays a role in control of the cell cycle, stress response, ribosome biogenesis and in those bacteria that undergo differentiation, in morphogenesis control. This chain is GTPase Obg, found in Sulfurihydrogenibium sp. (strain YO3AOP1).